A 732-amino-acid polypeptide reads, in one-letter code: Zinc/cadmium/lead-transporting P-type ATPase (732 aa).

At 1 to 124 the chain is on the cytoplasmic side; the sequence is MSTPDNHGKK…QAADEPQASR (124 aa). Residues 48-112 enclose the HMA domain; the sequence is TRYSWKVSGM…AVQKAGYSLR (65 aa). Zn(2+) is bound by residues aspartate 58, cysteine 59, and cysteine 62. Residues 125–145 traverse the membrane as a helical segment; the sequence is LKENLPLITLIVMMAISWGLE. Residue glutamine 146 is a topological domain, periplasmic. A helical membrane pass occupies residues 147–167; that stretch reads FNHPFGQLAFIATTLVGLYPI. The Cytoplasmic portion of the chain corresponds to 168–179; sequence ARQALRLIKSGS. Residues 180–197 traverse the membrane as a helical segment; it reads YFAIETLMSVAAIGALFI. The Periplasmic segment spans residues 198-202; that stretch reads GATAE. A helical membrane pass occupies residues 203–222; the sequence is AAMVLLLFLIGERLEGWAAS. Residues 223–356 lie on the Cytoplasmic side of the membrane; that stretch reads RARQGVSALM…IDRFSRIYTP (134 aa). The chain crosses the membrane as a helical span at residues 357-377; the sequence is AIMAVALLVTLVPPLLFAASW. Topologically, residues 378-383 are periplasmic; that stretch reads QEWIYK. The helical transmembrane segment at 384–404 threads the bilayer; that stretch reads GLTLLLIGCPCALVISTPAAI. Zn(2+)-binding residues include cysteine 392 and cysteine 394. Residues 405 to 685 are Cytoplasmic-facing; it reads TSGLAAAARR…RATHANIRQN (281 aa). The active-site 4-aspartylphosphate intermediate is the aspartate 436. 3 residues coordinate Mg(2+): aspartate 436, threonine 438, and aspartate 628. Residues 686–702 form a helical membrane-spanning segment; sequence ITIALGLKGIFLVTTLL. The Periplasmic segment spans residues 703-707; the sequence is GMTGL. Residues 708–729 traverse the membrane as a helical segment; it reads WLAVLADTGATVLVTANALRLL. Aspartate 714 is a binding site for Zn(2+). Over 730-732 the chain is Cytoplasmic; sequence RRR.

Belongs to the cation transport ATPase (P-type) (TC 3.A.3) family. Type IB subfamily.

It is found in the cell inner membrane. The catalysed reaction is Pb(2+)(in) + ATP + H2O = Pb(2+)(out) + ADP + phosphate + H(+). It catalyses the reaction Zn(2+)(in) + ATP + H2O = Zn(2+)(out) + ADP + phosphate + H(+). It carries out the reaction Cd(2+)(in) + ATP + H2O = Cd(2+)(out) + ADP + phosphate + H(+). In terms of biological role, confers resistance to zinc, cadmium and lead. Couples the hydrolysis of ATP with the export of zinc, cadmium or lead. In Shigella sonnei (strain Ss046), this protein is Zinc/cadmium/lead-transporting P-type ATPase.